Here is an 89-residue protein sequence, read N- to C-terminus: Small ribosomal subunit protein uS15 (89 aa).

It belongs to the universal ribosomal protein uS15 family. As to quaternary structure, part of the 30S ribosomal subunit. Forms a bridge to the 50S subunit in the 70S ribosome, contacting the 23S rRNA.

One of the primary rRNA binding proteins, it binds directly to 16S rRNA where it helps nucleate assembly of the platform of the 30S subunit by binding and bridging several RNA helices of the 16S rRNA. Its function is as follows. Forms an intersubunit bridge (bridge B4) with the 23S rRNA of the 50S subunit in the ribosome. This is Small ribosomal subunit protein uS15 from Shewanella woodyi (strain ATCC 51908 / MS32).